A 230-amino-acid chain; its full sequence is Interleukin-22 receptor subunit alpha-2 (230 aa).

The N-terminal stretch at methionine 1–glutamate 20 is a signal peptide. Fibronectin type-III domains are found at residues threonine 29–aspartate 128 and proline 129–proline 230. 2 cysteine pairs are disulfide-bonded: cysteine 77/cysteine 85 and cysteine 205/cysteine 226.

It belongs to the type II cytokine receptor family. In terms of tissue distribution, highly expressed in lymph nodes and at lower levels in lung, spleen, and thymus. Not expressed in kidney, liver and heart.

It localises to the secreted. In terms of biological role, receptor for IL22. Binds to IL22, prevents interaction with the functional IL-22R complex and blocks the activity of IL22 (in vitro). May play an important role as an IL22 antagonist in the regulation of inflammatory responses. The polypeptide is Interleukin-22 receptor subunit alpha-2 (Il22ra2) (Mus musculus (Mouse)).